Here is a 158-residue protein sequence, read N- to C-terminus: NAD(P)H-quinone oxidoreductase subunit J, chloroplastic (158 aa).

The protein belongs to the complex I 30 kDa subunit family. In terms of assembly, NDH is composed of at least 16 different subunits, 5 of which are encoded in the nucleus.

It localises to the plastid. The protein localises to the chloroplast thylakoid membrane. The catalysed reaction is a plastoquinone + NADH + (n+1) H(+)(in) = a plastoquinol + NAD(+) + n H(+)(out). The enzyme catalyses a plastoquinone + NADPH + (n+1) H(+)(in) = a plastoquinol + NADP(+) + n H(+)(out). Functionally, NDH shuttles electrons from NAD(P)H:plastoquinone, via FMN and iron-sulfur (Fe-S) centers, to quinones in the photosynthetic chain and possibly in a chloroplast respiratory chain. The immediate electron acceptor for the enzyme in this species is believed to be plastoquinone. Couples the redox reaction to proton translocation, and thus conserves the redox energy in a proton gradient. In Psilotum nudum (Whisk fern), this protein is NAD(P)H-quinone oxidoreductase subunit J, chloroplastic.